We begin with the raw amino-acid sequence, 241 residues long: Triosephosphate isomerase (241 aa).

9–11 (NWK) provides a ligand contact to substrate. H88 functions as the Electrophile in the catalytic mechanism. E158 serves as the catalytic Proton acceptor. Substrate-binding positions include G164, S203, and 224–225 (GG).

The protein belongs to the triosephosphate isomerase family. In terms of assembly, homodimer.

The protein resides in the cytoplasm. The catalysed reaction is D-glyceraldehyde 3-phosphate = dihydroxyacetone phosphate. Its pathway is carbohydrate biosynthesis; gluconeogenesis. It participates in carbohydrate degradation; glycolysis; D-glyceraldehyde 3-phosphate from glycerone phosphate: step 1/1. Involved in the gluconeogenesis. Catalyzes stereospecifically the conversion of dihydroxyacetone phosphate (DHAP) to D-glyceraldehyde-3-phosphate (G3P). This chain is Triosephosphate isomerase, found in Dichelobacter nodosus (strain VCS1703A).